The following is a 316-amino-acid chain: Transaldolase (316 aa).

The Schiff-base intermediate with substrate role is filled by Lys-125.

This sequence belongs to the transaldolase family. Type 1 subfamily. As to quaternary structure, homodimer.

The protein localises to the cytoplasm. It catalyses the reaction D-sedoheptulose 7-phosphate + D-glyceraldehyde 3-phosphate = D-erythrose 4-phosphate + beta-D-fructose 6-phosphate. Its pathway is carbohydrate degradation; pentose phosphate pathway; D-glyceraldehyde 3-phosphate and beta-D-fructose 6-phosphate from D-ribose 5-phosphate and D-xylulose 5-phosphate (non-oxidative stage): step 2/3. Transaldolase is important for the balance of metabolites in the pentose-phosphate pathway. The polypeptide is Transaldolase (Verminephrobacter eiseniae (strain EF01-2)).